The following is a 273-amino-acid chain: MLEITLLGTGSPIPDPDRAGPSTLVRAGAQAFLVDCGRGVLQRAAAVGVGAAGLSAVLLTHLHGDVLITSWVTNFAADPAPLPIIGPPGTAEVVEATLKAFGHDIGYRIAHHADLTTPPPIEVHEYTAGPAWDRDGVTIRVAPTDHRPVTPTIGFRIESDGASVVLAGDTVPCDSLDQLAAGADALVHTVIRKDIVTQIPQQRVKDICDYHSSVQEAAATANRAGVGTLVMTHYVPAIGPGQEEQWRALAATEFSGRIEVGNDLHRVEVHPRR.

Positions 61, 63, 146, 169, and 233 each coordinate Zn(2+).

The protein belongs to the RNase Z family. Homodimer. Requires Zn(2+) as cofactor.

The catalysed reaction is Endonucleolytic cleavage of RNA, removing extra 3' nucleotides from tRNA precursor, generating 3' termini of tRNAs. A 3'-hydroxy group is left at the tRNA terminus and a 5'-phosphoryl group is left at the trailer molecule.. Its function is as follows. Zinc phosphodiesterase, which displays some tRNA 3'-processing endonuclease activity. Probably involved in tRNA maturation, by removing a 3'-trailer from precursor tRNA. This Mycobacterium tuberculosis (strain ATCC 25177 / H37Ra) protein is Ribonuclease Z.